Reading from the N-terminus, the 405-residue chain is L-carnitine CoA-transferase (405 aa).

The CoA site is built by K97 and R104. D169 (nucleophile) is an active-site residue.

The protein belongs to the CoA-transferase III family. CaiB subfamily. As to quaternary structure, homodimer.

The protein localises to the cytoplasm. The enzyme catalyses crotonobetainyl-CoA + (R)-carnitine = crotonobetaine + (R)-carnitinyl-CoA. It carries out the reaction 4-(trimethylamino)butanoyl-CoA + (R)-carnitine = (R)-carnitinyl-CoA + 4-(trimethylamino)butanoate. It functions in the pathway amine and polyamine metabolism; carnitine metabolism. Catalyzes the reversible transfer of the CoA moiety from gamma-butyrobetainyl-CoA to L-carnitine to generate L-carnitinyl-CoA and gamma-butyrobetaine. Is also able to catalyze the reversible transfer of the CoA moiety from gamma-butyrobetainyl-CoA or L-carnitinyl-CoA to crotonobetaine to generate crotonobetainyl-CoA. This Salmonella gallinarum (strain 287/91 / NCTC 13346) protein is L-carnitine CoA-transferase.